Here is a 432-residue protein sequence, read N- to C-terminus: MKKISSHYSVVIAILVVVTMTSMCQAVGSNVYPLILVPGNGGNQLEVRLDREYKPSSVWCSSWLYPIHKKSGGWFRLWFDAAVLLSPFTRCFSDRMMLYYDPDLDDYQNAPGVQTRVPHFGSTKSLLYLDPRLRDATSYMEHLVKALEKKCGYVNDQTILGAPYDFRYGLAASGHPSRVASQFLQDLKQLVEKTSSENEGKPVILLSHSLGGLFVLHFLNRTTPSWRRKYIKHFVALAAPWGGTISQMKTFASGNTLGVPLVNPLLVRRHQRTSESNQWLLPSTKVFHDRTKPLVVTPQVNYTAYEMDRFFADIGFSQGVVPYKTRVLPLTEELMTPGVPVTCIYGRGVDTPEVLMYGKGGFDKQPEIKYGDGDGTVNLASLAALKVDSLNTVEIDGVSHTSILKDEIALKEIMKQISIINYELANVNAVNE.

Residues 7–29 form a helical membrane-spanning segment; it reads HYSVVIAILVVVTMTSMCQAVGS. The Acyl-ester intermediate role is filled by serine 209. Residues aspartate 374 and histidine 400 each act as charge relay system in the active site.

This sequence belongs to the AB hydrolase superfamily. Lipase family.

Its subcellular location is the membrane. The chain is Lecithin-cholesterol acyltransferase-like 1 (LCAT1) from Arabidopsis thaliana (Mouse-ear cress).